Consider the following 717-residue polypeptide: Fatty acid oxidation complex subunit alpha (717 aa).

The interval 1 to 190 (MIHAGNAITV…KDGAVDAVVA (190 aa)) is enoyl-CoA hydratase/isomerase. Asp-298 is a substrate binding site. A 3-hydroxyacyl-CoA dehydrogenase region spans residues 313–717 (HPVNQAAVLG…MAANNKKFYG (405 aa)). Residues Met-326, Asp-345, 402–404 (VTE), Lys-409, and Ser-431 each bind NAD(+). Catalysis depends on His-452, which acts as the For 3-hydroxyacyl-CoA dehydrogenase activity. Asn-455 provides a ligand contact to NAD(+). A substrate-binding site is contributed by Asn-502.

In the N-terminal section; belongs to the enoyl-CoA hydratase/isomerase family. The protein in the C-terminal section; belongs to the 3-hydroxyacyl-CoA dehydrogenase family. Heterotetramer of two alpha chains (FadB) and two beta chains (FadA).

The catalysed reaction is a (3S)-3-hydroxyacyl-CoA + NAD(+) = a 3-oxoacyl-CoA + NADH + H(+). It carries out the reaction a (3S)-3-hydroxyacyl-CoA = a (2E)-enoyl-CoA + H2O. The enzyme catalyses a 4-saturated-(3S)-3-hydroxyacyl-CoA = a (3E)-enoyl-CoA + H2O. It catalyses the reaction (3S)-3-hydroxybutanoyl-CoA = (3R)-3-hydroxybutanoyl-CoA. The catalysed reaction is a (3Z)-enoyl-CoA = a 4-saturated (2E)-enoyl-CoA. It carries out the reaction a (3E)-enoyl-CoA = a 4-saturated (2E)-enoyl-CoA. The protein operates within lipid metabolism; fatty acid beta-oxidation. In terms of biological role, involved in the aerobic and anaerobic degradation of long-chain fatty acids via beta-oxidation cycle. Catalyzes the formation of 3-oxoacyl-CoA from enoyl-CoA via L-3-hydroxyacyl-CoA. It can also use D-3-hydroxyacyl-CoA and cis-3-enoyl-CoA as substrate. In Acinetobacter baumannii (strain SDF), this protein is Fatty acid oxidation complex subunit alpha.